The following is a 156-amino-acid chain: Small ribosomal subunit protein uS7 (156 aa).

This sequence belongs to the universal ribosomal protein uS7 family. As to quaternary structure, part of the 30S ribosomal subunit. Contacts proteins S9 and S11.

Its function is as follows. One of the primary rRNA binding proteins, it binds directly to 16S rRNA where it nucleates assembly of the head domain of the 30S subunit. Is located at the subunit interface close to the decoding center, probably blocks exit of the E-site tRNA. The sequence is that of Small ribosomal subunit protein uS7 from Nitrobacter hamburgensis (strain DSM 10229 / NCIMB 13809 / X14).